We begin with the raw amino-acid sequence, 237 residues long: Sugar fermentation stimulation protein homolog (237 aa).

This sequence belongs to the SfsA family.

This is Sugar fermentation stimulation protein homolog from Colwellia psychrerythraea (strain 34H / ATCC BAA-681) (Vibrio psychroerythus).